Reading from the N-terminus, the 191-residue chain is Calcium-activated potassium channel subunit beta-1 (191 aa).

Residues 1-18 lie on the Cytoplasmic side of the membrane; sequence MVKKLVMAQKRGETRALC. Residues 19–39 form a helical membrane-spanning segment; that stretch reads LGVTMVVCAVITYYILVTTVL. Over 40 to 157 the chain is Extracellular; it reads PLYQKSVWTQ…FQRLYGPQAL (118 aa). Residues Asn-80 and Asn-142 are each glycosylated (N-linked (GlcNAc...) asparagine). Residues 158-178 traverse the membrane as a helical segment; that stretch reads LFSLFWPTFLLTGGLLIIAMV. At 179-191 the chain is on the cytoplasmic side; sequence KSNQYLSILAAQK.

The protein belongs to the KCNMB (TC 8.A.14.1) family. KCNMB1 subfamily. In terms of assembly, interacts with KCNMA1 tetramer. There are probably 4 molecules of KCMNB1 per KCNMA1 tetramer. Post-translationally, N-glycosylated. Abundantly expressed in smooth muscle. Low levels of expression in most other tissues. Within the brain, relatively high levels found in hippocampus and corpus callosum.

It is found in the membrane. Regulatory subunit of the calcium activated potassium KCNMA1 (maxiK) channel. Modulates the calcium sensitivity and gating kinetics of KCNMA1, thereby contributing to KCNMA1 channel diversity. Increases the apparent Ca(2+)/voltage sensitivity of the KCNMA1 channel. It also modifies KCNMA1 channel kinetics and alters its pharmacological properties. It slows down the activation and the deactivation kinetics of the channel. Acts as a negative regulator of smooth muscle contraction by enhancing the calcium sensitivity to KCNMA1. Its presence is also a requirement for internal binding of the KCNMA1 channel opener dehydrosoyasaponin I (DHS-1) triterpene glycoside and for external binding of the agonist hormone 17-beta-estradiol (E2). Increases the binding activity of charybdotoxin (CTX) toxin to KCNMA1 peptide blocker by increasing the CTX association rate and decreasing the dissociation rate. The sequence is that of Calcium-activated potassium channel subunit beta-1 (KCNMB1) from Homo sapiens (Human).